Here is a 266-residue protein sequence, read N- to C-terminus: Type III pantothenate kinase (266 aa).

6–13 provides a ligand contact to ATP; sequence DAGNTNIV. 107–110 contacts substrate; the sequence is GADR. The active-site Proton acceptor is the Asp109. Asp129 provides a ligand contact to K(+). Thr132 contributes to the ATP binding site. A substrate-binding site is contributed by Thr184.

This sequence belongs to the type III pantothenate kinase family. In terms of assembly, homodimer. It depends on NH4(+) as a cofactor. K(+) is required as a cofactor.

The protein localises to the cytoplasm. The enzyme catalyses (R)-pantothenate + ATP = (R)-4'-phosphopantothenate + ADP + H(+). It functions in the pathway cofactor biosynthesis; coenzyme A biosynthesis; CoA from (R)-pantothenate: step 1/5. Functionally, catalyzes the phosphorylation of pantothenate (Pan), the first step in CoA biosynthesis. The protein is Type III pantothenate kinase of Acidiphilium cryptum (strain JF-5).